The following is a 311-amino-acid chain: MTTVTKHKVLLIAGPTAVGKTALSLALAKQLNGEIISGDSMQVYRHLDIGTAKIMPEEQAGIPHHLIDIKNIDQRFTVAEFVSRTTALIIDISARGKLPIIVGGTGFYLQSLLAGYQFGPADNEPDMAYRQAWFDRAAVEGSDVAWMALKQRDPQAATAIAPANLVRVVRALEYVHTTGQLFSEQADTHGDTLDAYTLCLTAERALLYTRINQRVDQMVAAGLEQEARWLFDQGGAMLPAGKGIGYHEWFPYFNGEQTRDESIAKIKQDSRRYAKRQLTWFRNKMSVDWINLLEHPELRASIDQRLASWLS.

14–21 (GPTAVGKT) contacts ATP. 16-21 (TAVGKT) serves as a coordination point for substrate. Residues 39 to 42 (DSMQ) are interaction with substrate tRNA.

Belongs to the IPP transferase family. As to quaternary structure, monomer. Mg(2+) is required as a cofactor.

It carries out the reaction adenosine(37) in tRNA + dimethylallyl diphosphate = N(6)-dimethylallyladenosine(37) in tRNA + diphosphate. Functionally, catalyzes the transfer of a dimethylallyl group onto the adenine at position 37 in tRNAs that read codons beginning with uridine, leading to the formation of N6-(dimethylallyl)adenosine (i(6)A). This is tRNA dimethylallyltransferase from Lactiplantibacillus plantarum (strain ATCC BAA-793 / NCIMB 8826 / WCFS1) (Lactobacillus plantarum).